We begin with the raw amino-acid sequence, 326 residues long: Transposase InsH for insertion sequence element IS5Y (326 aa).

This sequence belongs to the transposase 11 family.

Functionally, involved in the transposition of the insertion sequence IS5. The sequence is that of Transposase InsH for insertion sequence element IS5Y (insH5) from Escherichia coli (strain K12).